A 490-amino-acid polypeptide reads, in one-letter code: Secretory immunoglobulin A-binding protein EsiB (490 aa).

A signal peptide spans 1–23 (MKKSLLAVMLTGLFALVSLPALG). Sel1-like repeat units follow at residues 39-74 (AKAQLELGYRYFQGNETTKDLTQAMDWFRRAAEQGY), 77-109 (AEYVLGLRYMNGEGVPQDYAQAVIWYKKAALKG), 111-145 (PQAQQNLGVMYHEGNGVKVDKAESVKWFRLAAEQG), 153-182 (MGDAYFEGDGVTRDYVMAREWYSKAAEQGN), 185-218 (SCNQLGYMYSRGLGVERNDAISAQWYRKSATSGD), 222-254 (QLHLADMYYFGIGVTQDYTQSRVLFSQSAEQGN), 256-290 (IAQFRLGYILEQGLAGAKEPLKALEWYRKSAEQGN), 291-327 (SDGQYYLAHLYDKGAEGVAKNREQAISWYTKSAEQGD), 328-361 (ATAQANLGAIYFRLGSEEEHKKAVEWFRKAAAKG), 364-397 (AAQFNLGNALLQGKGVKKDEQQAAIWMRKAAEQG), and 399-430 (SAAQVQLGEIYYYGLGVERDYVQAWAWFDTAS). 3 residues coordinate Mg(2+): H122, E159, and D161.

As to quaternary structure, interacts with human secreted IgA (SIgA) at least via resides 244-260. Requires Mg(2+) as cofactor.

The protein resides in the cell surface. In terms of biological role, upon host (human neutrophil) infection interferes with productive FCAR signaling, inhibiting secreted IgA (SIgA) effector functions and probably avoiding neutrophil activation. Inhibits the SIgA-mediated oxidative burst by neutrophils, decreases generation of ROS (reactive oxygen species) by neutrophils and reduces chemotaxis by neutrophils, all of which are SIgA effector functions used to stimulate the immune response. Does not block SIgA-binding to its receptor (FCAR) on neutrophils, but it decreases SIgA-stimulated phosphorylation of cytoplasmic proteins, including phospholipase C-gamma and MAP kinases, all actions that may be advantageous to the pathogen. This Escherichia coli O6:H1 (strain CFT073 / ATCC 700928 / UPEC) protein is Secretory immunoglobulin A-binding protein EsiB.